The following is a 431-amino-acid chain: 3'3'-cGAMP-specific phosphodiesterase 1 (431 aa).

Positions 39–155 (DINHGHRVGY…IFLADRVDYL (117 aa)) constitute an HD domain. The HD-GYP domain occupies 231-427 (GVEEIMSIAM…YYQLSIAESP (197 aa)). The a divalent metal cation site is built by H288 and D289. The Proton donor role is filled by K292. A divalent metal cation is bound by residues H317, H341, H342, and D370.

Monomer. Ca(2+) is required as a cofactor. Mg(2+) serves as cofactor.

It catalyses the reaction 3',3'-cGAMP + H2O = 5'-pApG-3' + H(+). The catalysed reaction is 5'-pApG-3' + H2O = 5'-ApG-3' + phosphate. Phosphodiesterase (PDE) that catalyzes the hydrolysis of 3'3'-cyclic GMP-AMP (3'3'-cGAMP), leading to linear 5'-pApG. Also displays 5'-nucleotidase activity, further hydrolyzing 5'-pApG to 5'-ApG. Counteracts the function of the 3'3'-cGAMP synthase DncV, and is involved in the modulation of intracellular 3'3'-cGAMP levels. Enhances bacterial chemotaxis and inhibits intestinal colonization in vivo. Thus exerts a crucial role in regulating bacterial infectivity through catalyzing 3'3'-cGAMP degradation. Is specific for 3'3'-cGAMP since it cannot degrade other cGAMP linkage isomers (3'2'-, 2'3'-, and 2'2'-cGAMPs). Is also able to hydrolyze c-di-GMP but not c-di-AMP. This Vibrio cholerae serotype O1 (strain ATCC 39315 / El Tor Inaba N16961) protein is 3'3'-cGAMP-specific phosphodiesterase 1.